Reading from the N-terminus, the 143-residue chain is Cofilin (143 aa).

Residues G5–S137 form the ADF-H domain.

It belongs to the actin-binding proteins ADF family.

It localises to the cytoplasm. The protein localises to the cytoskeleton. The protein resides in the nucleus matrix. In terms of biological role, controls reversibly actin polymerization and depolymerization in a pH-sensitive manner. It has the ability to bind G- and F-actin in a 1:1 ratio of cofilin to actin. Binding to F-actin is regulated by tropomyosin. It is the major component of intranuclear and cytoplasmic actin rods. Required for accumulation of actin at the cell division site via depolymerizing actin at the cell ends. In association with myosin II has a role in the assembly of the contractile ring via severing actin filaments. Involved in the maintenance of the contractile ring once formed. In association with profilin and capping protein, has a role in the mitotic reorganization of the actin cytoskeleton. This Kluyveromyces lactis (strain ATCC 8585 / CBS 2359 / DSM 70799 / NBRC 1267 / NRRL Y-1140 / WM37) (Yeast) protein is Cofilin (COF1).